The following is a 1565-amino-acid chain: Structure-specific endonuclease subunit SLX4 (1565 aa).

Residues 1–87 (MVPESAPNGN…ENEYKLDATD (87 aa)) form a disordered region. Residues 7-24 (PNGNSQPLPSCFTTTGVP) show a composition bias toward polar residues. Positions 43–58 (KRADPERLRHASEESP) are enriched in basic and acidic residues. Ser111 carries the phosphoserine modification. A Glycyl lysine isopeptide (Lys-Gly) (interchain with G-Cter in SUMO2) cross-link involves residue Lys115. 2 consecutive UBZ4-type zinc fingers follow at residues 117–147 (LFFC…DEAE) and 157–185 (IPDC…VRME). Residues Cys120, Cys123, His138, Cys142, Cys160, and Cys163 each coordinate Zn(2+). A Glycyl lysine isopeptide (Lys-Gly) (interchain with G-Cter in SUMO2) cross-link involves residue Lys171. His176 and Cys180 together coordinate Zn(2+). Disordered stretches follow at residues 203–242 (EVDG…PEAP), 279–305 (GAEK…ETTG), and 387–418 (EPQL…SHSP). The segment covering 220–236 (LKRKGVTTKREPRRRKV) has biased composition (basic residues). Lys283 participates in a covalent cross-link: Glycyl lysine isopeptide (Lys-Gly) (interchain with G-Cter in SUMO2). Residues 296-305 (LVTQDSETTG) show a composition bias toward polar residues. The tract at residues 499–1565 (MVNNPHLSDV…PSGRKKKDQK (1067 aa)) is interaction with PLK1 and TERF2-TERF2IP. Positions 506 to 579 (SDVQFQLDSG…LYMADTDMPP (74 aa)) constitute a BTB domain. Residue Lys649 forms a Glycyl lysine isopeptide (Lys-Gly) (interchain with G-Cter in SUMO2) linkage. Disordered regions lie at residues 683–769 (RAAD…DPSF), 789–848 (GCKQ…SPSQ), 861–943 (PSVS…SPRA), 963–989 (DEEL…EFSP), 1063–1099 (PGVS…PNLE), 1128–1212 (GRQA…MGDY), and 1249–1337 (SDDC…ITPM). Positions 715–730 (ENTEHMESSGLEKEEA) are enriched in basic and acidic residues. Polar residues predominate over residues 798-808 (PRVSSELSQIT). The span at 809-822 (VDHEEQSDHVRETQ) shows a compositional bias: basic and acidic residues. Low complexity-rich tracts occupy residues 833–848 (SCSL…SPSQ) and 861–875 (PSVS…RVAS). 2 positions are modified to phosphoserine: Ser845 and Ser875. Residues 877-894 (RSLSPTTPTKQRRGSNIV) show a composition bias toward polar residues. Glycyl lysine isopeptide (Lys-Gly) (interchain with G-Cter in SUMO2) cross-links involve residues Lys886, Lys898, and Lys925. Residues Ser926 and Ser940 each carry the phosphoserine modification. Residues 967–985 (EHTKTESVSKDSPEGRKVP) show a composition bias toward basic and acidic residues. Lys983 is covalently cross-linked (Glycyl lysine isopeptide (Lys-Gly) (interchain with G-Cter in SUMO2)). Ser988 is subject to Phosphoserine. An interaction with MUS81 region spans residues 1120 to 1413 (ITLGAFDSGR…TTETCNPSRL (294 aa)). A compositionally biased stretch (acidic residues) spans 1179 to 1189 (DVVEVGDSDDE). Phosphoserine is present on residues Ser1249 and Ser1254. Acidic residues predominate over residues 1285–1295 (LWDDWNEEEGQ). Glycyl lysine isopeptide (Lys-Gly) (interchain with G-Cter in SUMO2) cross-links involve residues Lys1349 and Lys1350. Disordered regions lie at residues 1381-1449 (ESDS…SSKS) and 1546-1565 (KEKL…KDQK). Residue Ser1384 is modified to Phosphoserine. The span at 1401–1412 (QASTTETCNPSR) shows a compositional bias: polar residues. Positions 1406–1565 (ETCNPSRLPT…PSGRKKKDQK (160 aa)) are interaction with SLX1. The span at 1437–1449 (SVDGSDNSFSSKS) shows a compositional bias: low complexity. Residues 1547–1565 (EKLKHKRRQPSGRKKKDQK) show a composition bias toward basic residues.

The protein belongs to the SLX4 family. Forms a heterodimer with SLX1A/GIYD1. Interacts with ERCC4/XPF; catalytic subunit of the ERCC4-ERCC1 endonuclease. Interacts with MUS81; catalytic subunit of the MUS81-EME1 endonuclease. Interacts with MSH2; component of the MSH2-MSH3 mismatch repair complex. Interacts with TERF2-TERF2IP. Interacts with PLK1 and SLX4IP. In terms of tissue distribution, highly expressed in testis. Expressed in bone marrow, brain, thymus and weakly in heart, kidney and spleen.

It localises to the nucleus. Its function is as follows. Regulatory subunit that interacts with and increases the activity of different structure-specific endonucleases. Has several distinct roles in protecting genome stability by resolving diverse forms of deleterious DNA structures originating from replication and recombination intermediates and from DNA damage. Component of the SLX1-SLX4 structure-specific endonuclease that resolves DNA secondary structures generated during DNA repair and recombination. Has endonuclease activity towards branched DNA substrates, introducing single-strand cuts in duplex DNA close to junctions with ss-DNA. Has a preference for 5'-flap structures, and promotes symmetrical cleavage of static and migrating Holliday junctions (HJs). Resolves HJs by generating two pairs of ligatable, nicked duplex products. Interacts with the structure-specific ERCC4-ERCC1 endonuclease and promotes the cleavage of bubble structures. Interacts with the structure-specific MUS81-EME1 endonuclease and promotes the cleavage of 3'-flap and replication fork-like structures. SLX4 is required for recovery from alkylation-induced DNA damage and is involved in the resolution of DNA double-strand breaks. The sequence is that of Structure-specific endonuclease subunit SLX4 (Slx4) from Mus musculus (Mouse).